The following is a 1534-amino-acid chain: Dicer-like protein 2 (1534 aa).

Residues 1 to 10 (MDQDPRKDNP) show a composition bias toward basic and acidic residues. Positions 1-36 (MDQDPRKDNPVEMDVDRDDSSQDPDDNESFKSALDE) are disordered. A compositionally biased stretch (acidic residues) spans 11-27 (VEMDVDRDDSSQDPDDN). A Helicase ATP-binding domain is found at 65-249 (TPAALTARAY…IEKLEQVLDA (185 aa)). 78–85 (MFEASLKQ) contributes to the ATP binding site. The DEAH box motif lies at 192–195 (DEAH). In terms of domain architecture, Helicase C-terminal spans 404–575 (KVQTLLKVLA…NAELELLDDP (172 aa)). Residues 597–700 (ARSHLNHFCA…LPTKVSDFLA (104 aa)) form the Dicer dsRNA-binding fold domain. 2 consecutive RNase III domains span residues 959–1107 (MSLV…MCGG) and 1153–1353 (LEPL…VDSG). Mg(2+) is bound by residues Glu-1193, Asp-1339, and Glu-1342. One can recognise a DRBM domain in the interval 1383 to 1483 (HPNVELQILA…AEKGCLVIKA (101 aa)). Residues 1492 to 1504 (KAAAKEDKGHNTE) are compositionally biased toward basic and acidic residues. Positions 1492–1534 (KAAAKEDKGHNTENGDANADNGQSGEKEEVPDCRDADGDTVMN) are disordered. Residues 1505-1515 (NGDANADNGQS) are compositionally biased toward polar residues. Residues 1516–1528 (GEKEEVPDCRDAD) show a composition bias toward basic and acidic residues.

This sequence belongs to the helicase family. Dicer subfamily. Requires Mg(2+) as cofactor. Mn(2+) is required as a cofactor.

Functionally, dicer-like endonuclease involved in cleaving double-stranded RNA in the RNA interference (RNAi) pathway. Produces 21 to 25 bp dsRNAs (siRNAs) which target the selective destruction of homologous RNAs leading to sequence-specific suppression of gene expression, called post-transcriptional gene silencing (PTGS). Part of a broad host defense response against viral infection and transposons. Controls the expression of the non-LTR retrotransposon Tad in the African strain, Adiomopoume. This chain is Dicer-like protein 2 (dcl-2), found in Neurospora crassa (strain ATCC 24698 / 74-OR23-1A / CBS 708.71 / DSM 1257 / FGSC 987).